Consider the following 512-residue polypeptide: Maturase K (512 aa).

This sequence belongs to the intron maturase 2 family. MatK subfamily.

Its subcellular location is the plastid. The protein resides in the chloroplast. Functionally, usually encoded in the trnK tRNA gene intron. Probably assists in splicing its own and other chloroplast group II introns. The polypeptide is Maturase K (Acer campestre (Field maple)).